We begin with the raw amino-acid sequence, 179 residues long: Pyridoxal 5'-phosphate synthase subunit PdxT (179 aa).

Gly-48–Ser-50 contributes to the L-glutamine binding site. The active-site Nucleophile is the Cys-79. L-glutamine contacts are provided by residues Arg-101 and Ile-127–Arg-128. Catalysis depends on charge relay system residues His-163 and Glu-165.

The protein belongs to the glutaminase PdxT/SNO family. In the presence of PdxS, forms a dodecamer of heterodimers. Only shows activity in the heterodimer.

It carries out the reaction aldehydo-D-ribose 5-phosphate + D-glyceraldehyde 3-phosphate + L-glutamine = pyridoxal 5'-phosphate + L-glutamate + phosphate + 3 H2O + H(+). It catalyses the reaction L-glutamine + H2O = L-glutamate + NH4(+). It participates in cofactor biosynthesis; pyridoxal 5'-phosphate biosynthesis. Functionally, catalyzes the hydrolysis of glutamine to glutamate and ammonia as part of the biosynthesis of pyridoxal 5'-phosphate. The resulting ammonia molecule is channeled to the active site of PdxS. The polypeptide is Pyridoxal 5'-phosphate synthase subunit PdxT (Francisella tularensis subsp. novicida (strain U112)).